The sequence spans 187 residues: Elongation factor P (187 aa).

Belongs to the elongation factor P family.

It localises to the cytoplasm. The protein operates within protein biosynthesis; polypeptide chain elongation. Functionally, involved in peptide bond synthesis. Stimulates efficient translation and peptide-bond synthesis on native or reconstituted 70S ribosomes in vitro. Probably functions indirectly by altering the affinity of the ribosome for aminoacyl-tRNA, thus increasing their reactivity as acceptors for peptidyl transferase. This Magnetococcus marinus (strain ATCC BAA-1437 / JCM 17883 / MC-1) protein is Elongation factor P.